Consider the following 266-residue polypeptide: Protein SCO2 homolog, mitochondrial (266 aa).

A mitochondrion-targeting transit peptide spans 1-41; it reads MLLLARPPKAWHRLFQLQPLALLGTPGGKTQHVRYQLFSTP. Over 42–60 the chain is Mitochondrial matrix; it reads GPADTGRQGQPQGPGLRTR. A helical transmembrane segment spans residues 61–78; sequence LLVTALVGAGLGGAWLAL. The Mitochondrial intermembrane portion of the chain corresponds to 79–266; the sequence is RAEKERGRQQ…HMAAFRSVLR (188 aa). The Thioredoxin domain maps to 85-259; sequence GRQQQRTEAL…ITDSVRRHMA (175 aa). Positions 133, 137, and 224 each coordinate Cu cation. Cys-133 and Cys-137 are joined by a disulfide.

Belongs to the SCO1/2 family. As to quaternary structure, homodimer. Interacts with COA6. Found in a complex with TMEM177, COX20, COA6, MT-CO2/COX2, COX18 and SCO1. Interacts with TMEM177 in a COX20-dependent manner. Interacts with COX20 in a MT-CO2/COX2- and COX18-dependent manner. Interacts with COX16.

It is found in the mitochondrion inner membrane. In terms of biological role, copper metallochaperone essential for the synthesis and maturation of cytochrome c oxidase subunit II (MT-CO2/COX2) by facilitating the incorporation of copper into the Cu(A) site of MT-CO2/COX2. Could also act as a thiol-disulfide oxidoreductase to regulate the redox state of the cysteines in SCO1 during maturation of MT-CO2/COX2. The protein is Protein SCO2 homolog, mitochondrial (SCO2) of Bos taurus (Bovine).